The sequence spans 318 residues: Cephalosporin-C deacetylase (318 aa).

Residue tyrosine 91 coordinates substrate. The active-site Nucleophile is serine 181. Active-site charge relay system residues include aspartate 269 and histidine 298.

Belongs to the carbohydrate esterase 7 family. As to quaternary structure, homohexamer.

The protein localises to the cytoplasm. It catalyses the reaction Deacetylation of xylans and xylo-oligosaccharides.. It carries out the reaction cephalosporin C + H2O = deacetylcephalosporin C + acetate + H(+). Its function is as follows. Esterase that removed acetyl groups from a number of O-acetylated small substrates, such as acetylated xylose, short xylooligosaccharides and cephalosporin C. Has no activity towards polymeric acetylated xylan. Cannot cleave amide linkages. The polypeptide is Cephalosporin-C deacetylase (cah) (Bacillus subtilis (strain 168)).